Here is a 312-residue protein sequence, read N- to C-terminus: Ribosomal protein L11 methyltransferase (312 aa).

Residues Thr162, Gly183, Asp205, and Asn248 each coordinate S-adenosyl-L-methionine.

It belongs to the methyltransferase superfamily. PrmA family.

Its subcellular location is the cytoplasm. It catalyses the reaction L-lysyl-[protein] + 3 S-adenosyl-L-methionine = N(6),N(6),N(6)-trimethyl-L-lysyl-[protein] + 3 S-adenosyl-L-homocysteine + 3 H(+). Its function is as follows. Methylates ribosomal protein L11. In Bacillus cereus (strain B4264), this protein is Ribosomal protein L11 methyltransferase.